Consider the following 414-residue polypeptide: Probable peptidoglycan glycosyltransferase FtsW (414 aa).

The Cytoplasmic segment spans residues 1-12; sequence MRLSLPRLKMPR. Residues 13 to 33 traverse the membrane as a helical segment; sequence LPGFSILVWISTALKGWVMGS. Residues 34–47 are Periplasmic-facing; the sequence is REKDTDSLIMYDRT. A helical transmembrane segment spans residues 48-68; that stretch reads LLWLTFGLAAIGFIMVTSASM. Over 69–86 the chain is Cytoplasmic; that stretch reads PIGQRLTNDPFFFAKRDG. A helical transmembrane segment spans residues 87–107; sequence VYLILAFILAIITLRLPMEFW. Residues 108 to 111 are Periplasmic-facing; that stretch reads QRYS. The helical transmembrane segment at 112-132 threads the bilayer; it reads ATMLLGSIILLMIVLVVGSSV. The Cytoplasmic portion of the chain corresponds to 133 to 174; the sequence is KGASRWIDLGLLRIQPAELTKLSLFCYIANYLVRKGDEVRNN. Residues 175 to 194 form a helical membrane-spanning segment; sequence LRGFLKPMGVILVLAVLLLA. Over 195-197 the chain is Periplasmic; sequence QPD. Residues 198–217 traverse the membrane as a helical segment; that stretch reads LGTVVVLFVTTLAMLFLAGA. Residue Lys-218 is a topological domain, cytoplasmic. A helical transmembrane segment spans residues 219–239; sequence LWQFIAIIGMGISAVVLLILA. Residues 240-301 lie on the Periplasmic side of the membrane; it reads EPYRIRRVTA…PEAHTDFIFA (62 aa). A helical transmembrane segment spans residues 302-322; it reads IIGEELGYVGVVLALLMVFFV. Residues 323–342 are Cytoplasmic-facing; sequence AFRAMSIGRKALEIDHRFSG. Residues 343–363 traverse the membrane as a helical segment; that stretch reads FLACSIGIWFSFQALVNVGAA. At 364 to 373 the chain is on the periplasmic side; it reads AGMLPTKGLT. The helical transmembrane segment at 374 to 394 threads the bilayer; sequence LPLISYGGSSLLIMSTAIMML. At 395–414 the chain is on the cytoplasmic side; the sequence is LRIDYETRLEKAQAFVRGSR.

This sequence belongs to the SEDS family. FtsW subfamily.

It localises to the cell inner membrane. It carries out the reaction [GlcNAc-(1-&gt;4)-Mur2Ac(oyl-L-Ala-gamma-D-Glu-L-Lys-D-Ala-D-Ala)](n)-di-trans,octa-cis-undecaprenyl diphosphate + beta-D-GlcNAc-(1-&gt;4)-Mur2Ac(oyl-L-Ala-gamma-D-Glu-L-Lys-D-Ala-D-Ala)-di-trans,octa-cis-undecaprenyl diphosphate = [GlcNAc-(1-&gt;4)-Mur2Ac(oyl-L-Ala-gamma-D-Glu-L-Lys-D-Ala-D-Ala)](n+1)-di-trans,octa-cis-undecaprenyl diphosphate + di-trans,octa-cis-undecaprenyl diphosphate + H(+). It functions in the pathway cell wall biogenesis; peptidoglycan biosynthesis. Functionally, peptidoglycan polymerase that is essential for cell division. The chain is Probable peptidoglycan glycosyltransferase FtsW from Escherichia coli O157:H7.